Consider the following 181-residue polypeptide: MGQQKPQIRSTTVLGVLRDGKAALGSDGQMTLGNTVMKHSTRKIRSLYQGKFVTGFAGATADALTLLERFEAKLEAYSGRLDRAAVELAKDWRTDKYLRRLEAMLAVVSSDKALIISGTGDVIEPEDGIVAIGSGSMYALAAARALMKHTTLSAEEIVRESLQTAAEICIYTNDHIAIETL.

The active site involves threonine 11. Residues alanine 166, cysteine 169, and threonine 172 each contribute to the Na(+) site.

This sequence belongs to the peptidase T1B family. HslV subfamily. As to quaternary structure, a double ring-shaped homohexamer of HslV is capped on each side by a ring-shaped HslU homohexamer. The assembly of the HslU/HslV complex is dependent on binding of ATP.

The protein resides in the cytoplasm. The catalysed reaction is ATP-dependent cleavage of peptide bonds with broad specificity.. Its activity is regulated as follows. Allosterically activated by HslU binding. Functionally, protease subunit of a proteasome-like degradation complex believed to be a general protein degrading machinery. The polypeptide is ATP-dependent protease subunit HslV (Chlorobaculum parvum (strain DSM 263 / NCIMB 8327) (Chlorobium vibrioforme subsp. thiosulfatophilum)).